The sequence spans 353 residues: MGCVQSTGVDDEAKARNDEIENQLKRDRVMAKNEIKMLLLGAGESGKSTVLKQMKLIHHGGYSDQEKDSYKEIIFSNTVQSMRAILDALPALDLALQPANDARRATILAVPGQIEAEVLPRDIADAIRQLWADPGLKEAVRRSREFQLNDSAVYYFNSIDRMSAPGYLPTDQDILRSRVKTTGITETTFKVGELTYKLFDVGGQRSERKKWIHCFENVTALVFLVSLSEYDQMLYEDESVNRMQEALTLFDSICNSRWFVKTSIILFLNKIDLFAEKLPARRSTYFPDFTGGDNYDAACDYLLHRFVSLNQSAATKQIYAHYTCATDTQQIKFVLSAIQDILLQLHLRECGLL.

Residue Gly2 is the site of N-myristoyl glycine attachment. Residue Cys3 is the site of S-palmitoyl cysteine attachment. In terms of domain architecture, G-alpha spans 33–353 (NEIKMLLLGA…QLHLRECGLL (321 aa)). The tract at residues 36–49 (KMLLLGAGESGKST) is G1 motif. GTP is bound by residues Glu44, Ser45, Gly46, Lys47, Ser48, Thr49, Asp150, Leu175, Thr181, Gly203, Asn269, Lys270, Asp272, and Ala325. Ser48 provides a ligand contact to Mg(2+). The segment at 173-181 (DILRSRVKT) is G2 motif. Position 181 (Thr181) interacts with Mg(2+). The G3 motif stretch occupies residues 196–205 (YKLFDVGGQR). The tract at residues 265 to 272 (ILFLNKID) is G4 motif. Positions 323-328 (TCATDT) are G5 motif.

This sequence belongs to the G-alpha family. G(q) subfamily. In terms of assembly, g proteins are composed of 3 units; alpha, beta and gamma. The alpha chain contains the guanine nucleotide binding site. Mg(2+) is required as a cofactor.

In terms of biological role, guanine nucleotide-binding proteins (G proteins) are involved as modulators or transducers in various transmembrane signaling systems. The protein is Guanine nucleotide-binding protein subunit alpha (CGP1) of Coprinellus congregatus (Inky cap fungus).